Consider the following 251-residue polypeptide: Phosphate import ATP-binding protein PstB (251 aa).

The 242-residue stretch at 5 to 246 folds into the ABC transporter domain; sequence IKIRGVNFFY…PRDKRTEDYI (242 aa). 37–44 contacts ATP; the sequence is GPSGCGKS.

The protein belongs to the ABC transporter superfamily. Phosphate importer (TC 3.A.1.7) family. The complex is composed of two ATP-binding proteins (PstB), two transmembrane proteins (PstC and PstA) and a solute-binding protein (PstS).

It localises to the cell membrane. It catalyses the reaction phosphate(out) + ATP + H2O = ADP + 2 phosphate(in) + H(+). Part of the ABC transporter complex PstSACB involved in phosphate import. Responsible for energy coupling to the transport system. This is Phosphate import ATP-binding protein PstB from Dehalococcoides mccartyi (strain CBDB1).